A 622-amino-acid chain; its full sequence is Sodium/potassium/calcium exchanger 4 (622 aa).

An N-terminal signal peptide occupies residues 1–38 (MALRGTLRPLKVRRRREMLPQQVGFVCAVLALVCCASG). Topologically, residues 39 to 97 (LFGSLGHKTASASKRVLPDTWRNRKLMAPVNGTQTAKNCTDPAIHEFPTDLFSNKERQH) are extracellular. Residues asparagine 69 and asparagine 76 are each glycosylated (N-linked (GlcNAc...) asparagine). The helical transmembrane segment at 98-118 (GAVLLHILGALYMFYALAIVC) threads the bilayer. At 119–142 (DDFFVPSLEKICERLHLSEDVAGA) the chain is on the cytoplasmic side. The stretch at 139–179 (VAGATFMAAGSSTPELFASVIGVFITHGDVGVGTIVGSAVF) is one Alpha-1 repeat. A helical transmembrane segment spans residues 143 to 163 (TFMAAGSSTPELFASVIGVFI). The Extracellular segment spans residues 164 to 172 (THGDVGVGT). A helical membrane pass occupies residues 173-193 (IVGSAVFNILCIIGVCGLFAG). Topologically, residues 194–200 (QVVRLTW) are cytoplasmic. A helical transmembrane segment spans residues 201-221 (WAVCRDSVYYTISVIVLIVFI). The Extracellular portion of the chain corresponds to 222–224 (YDE). Residues 225-245 (QIVWWEGLVLIILYVFYILIM) traverse the membrane as a helical segment. Over 246–457 (KYNVKMQAFF…RWEKFFMVTF (212 aa)) the chain is Cytoplasmic. The segment at 358-410 (ANGVSSKPLQNGRHENIENGNVPVENPEDPQQNQEQQPPPQPPPPEPEPVEAD) is disordered. Positions 380–393 (PVENPEDPQQNQEQ) are enriched in low complexity. The span at 394–404 (QPPPQPPPPEP) shows a compositional bias: pro residues. A helical transmembrane segment spans residues 458 to 478 (ITATLWIAVFSYIMVWLVTII). A topological domain (extracellular) is located at residue glycine 479. Residues 480 to 500 (YTLGIPDVIMGITFLAAGTSV) form a helical membrane-spanning segment. One copy of the Alpha-2 repeat lies at 495–526 (AAGTSVPDCMASLIVARQGLGDMAVSNTIGSN). Topologically, residues 501-526 (PDCMASLIVARQGLGDMAVSNTIGSN) are cytoplasmic. Residues 527–547 (VFDILVGLGVPWGLQTMVVNY) form a helical membrane-spanning segment. Residues 548-557 (GSTVKINSRG) are Extracellular-facing. The helical transmembrane segment at 558–578 (LVYSVVLLLGSVALTVLGIHL) threads the bilayer. The Cytoplasmic portion of the chain corresponds to 579-586 (NKWRLDRK). The chain crosses the membrane as a helical span at residues 587 to 607 (LGVYVLVLYAIFLCFSIMIEF). The Extracellular portion of the chain corresponds to 608 to 622 (NVFTFVNLPMCREDD).

This sequence belongs to the Ca(2+):cation antiporter (CaCA) (TC 2.A.19) family. SLC24A subfamily. As to expression, expressed abundantly in all regions of the brain, aorta, lung and thymus. Expressed at lower levels in the stomach and intestine.

The protein localises to the cell membrane. It is found in the cytoplasm. It carries out the reaction Ca(2+)(out) + K(+)(out) + 4 Na(+)(in) = Ca(2+)(in) + K(+)(in) + 4 Na(+)(out). Its function is as follows. Calcium, potassium:sodium antiporter that transports 1 Ca(2+) and 1 K(+) in exchange for 4 Na(+). Controls the rapid response termination and proper regulation of adaptation in olfactory sensory neurons (OSNs) which subsequently influences how odor information is encoded and perceived. May play a role in calcium transport during amelogenesis. This chain is Sodium/potassium/calcium exchanger 4, found in Homo sapiens (Human).